A 409-amino-acid polypeptide reads, in one-letter code: Outer membrane protein YopM (409 aa).

15 LRR repeats span residues 72–91, 92–113, 114–131, 132–153, 154–173, 174–195, 196–215, 216–237, 238–257, 258–279, 280–297, 298–317, 318–339, 340–357, and 358–379; these read QAHELELNNLGLSSLPELPP, HLESLVASCNSLTELPELPQSL, KSLLVDNNNLKALSDLPP, LLEYLGVSNNQLEKLPELQNSS, FLKIIDVDNNSLKKLPDLPP, SLEFIAAGNNQLEELPELQNLP, FLTAIYADNNSLKKLPDLPL, SLESIVAGNNILEELPELQNLP, FLTTIYADNNLLKTLPDLPP, SLEALNVRDNYLTDLPELPQSL, TFLDVSENIFSGLSELPP, NLYYLNASSNEIRSLCDLPP, SLEELNVSNNKLIELPALPPRL, ERLIASFNHLAEVPELPQ, and NLKQLHVEYNPLREFPDIPESV. Ca(2+) contacts are provided by asparagine 246 and aspartate 266. The Ca(2+) site is built by asparagine 307, glutamate 308, and asparagine 326.

Belongs to the LRR-containing bacterial E3 ligase family. Homotetramer forming a hollow cylinder with an inner diameter of approximately 35 angstroms.

The protein localises to the cell outer membrane. Its subcellular location is the secreted. Its function is as follows. Effector proteins function to alter host cell physiology and promote bacterial survival in host tissues. This chain is Outer membrane protein YopM (yopM), found in Yersinia pestis.